We begin with the raw amino-acid sequence, 1303 residues long: MPGPRGAAGGLAPEMRGAGAAGLLALLLLLLLLLLGLGGRVEGGPAGERGAGGGGALARERFKVVFAPVICKRTCLKGQCRDSCQQGSNMTLIGENGHSTDTLTGSGFRVVVCPLPCMNGGQCSSRNQCLCPPDFTGRFCQVPAGGAGGGTGGSGPGLSRTGALSTGALPPLAPEGDSVASKHAIYAVQVIADPPGPGEGPPAQHAAFLVPLGPGQISAEVQAPPPVVNVRVHHPPEASVQVHRIESSNAESAAPSQHLLPHPKPSHPRPPTQKPLGRCFQDTLPKQPCGSNPLPGLTKQEDCCGSIGTAWGQSKCHKCPQLQYTGVQKPGPVRGEVGADCPQGYKRLNSTHCQDINECAMPGVCRHGDCLNNPGSYRCVCPPGHSLGPSRTQCIADKPEEKSLCFRLVSPEHQCQHPLTTRLTRQLCCCSVGKAWGARCQRCPTDGTAAFKEICPAGKGYHILTSHQTLTIQGESDFSLFLHPDGPPKPQQLPESPSQAPPPEDTEEERGVTTDSPVSEERSVQQSHPTATTTPARPYPELISRPSPPTMRWFLPDLPPSRSAVEIAPTQVTETDECRLNQNICGHGECVPGPPDYSCHCNPGYRSHPQHRYCVDVNECEAEPCGPGRGICMNTGGSYNCHCNRGYRLHVGAGGRSCVDLNECAKPHLCGDGGFCINFPGHYKCNCYPGYRLKASRPPVCEDIDECRDPSSCPDGKCENKPGSFKCIACQPGYRSQGGGACRDVNECAEGSPCSPGWCENLPGSFRCTCAQGYAPAPDGRSCLDVDECEAGDVCDNGICSNTPGSFQCQCLSGYHLSRDRSHCEDIDECDFPAACIGGDCINTNGSYRCLCPQGHRLVGGRKCQDIDECSQDPSLCLPHGACKNLQGSYVCVCDEGFTPTQDQHGCEEVEQPHHKKECYLNFDDTVFCDSVLATNVTQQECCCSLGAGWGDHCEIYPCPVYSSAEFHSLCPDGKGYTQDNNIVNYGIPAHRDIDECMLFGSEICKEGKCVNTQPGYECYCKQGFYYDGNLLECVDVDECLDESNCRNGVCENTRGGYRCACTPPAEYSPAQRQCLSPEEMDVDECQDPAACRPGRCVNLPGSYRCECRPPWVPGPSGRDCQLPESPAERAPERRDVCWSQRGEDGMCAGPLAGPALTFDDCCCRQGRGWGAQCRPCPPRGAGSHCPTSQSESNSFWDTSPLLLGKPPRDEDSSEEDSDECRCVSGRCVPRPGGAVCECPGGFQLDASRARCVDIDECRELNQRGLLCKSERCVNTSGSFRCVCKAGFARSRPHGACVPQRRR.

A signal peptide spans 1 to 43 (MPGPRGAAGGLAPEMRGAGAAGLLALLLLLLLLLLGLGGRVEG). Residue asparagine 89 is glycosylated (N-linked (GlcNAc...) asparagine). Residues 109-141 (RVVVCPLPCMNGGQCSSRNQCLCPPDFTGRFCQ) enclose the EGF-like 1 domain. Disulfide bonds link cysteine 113/cysteine 123, cysteine 117/cysteine 129, cysteine 131/cysteine 140, cysteine 279/cysteine 303, cysteine 289/cysteine 316, and cysteine 304/cysteine 319. Residues 247–282 (SSNAESAAPSQHLLPHPKPSHPRPPTQKPLGRCFQD) form a disordered region. A TB 1 domain is found at 277–331 (GRCFQDTLPKQPCGSNPLPGLTKQEDCCGSIGTAWGQSKCHKCPQLQYTGVQKPG). The N-linked (GlcNAc...) asparagine glycan is linked to asparagine 349. The region spanning 355–395 (DINECAMPGVCRHGDCLNNPGSYRCVCPPGHSLGPSRTQCI) is the EGF-like 2; calcium-binding domain. 7 disulfides stabilise this stretch: cysteine 359-cysteine 370, cysteine 365-cysteine 379, cysteine 381-cysteine 394, cysteine 405-cysteine 428, cysteine 415-cysteine 440, cysteine 429-cysteine 443, and cysteine 430-cysteine 455. The TB 2 domain occupies 403-455 (SLCFRLVSPEHQCQHPLTTRLTRQLCCCSVGKAWGARCQRCPTDGTAAFKEIC). Residues 478-552 (FSLFLHPDGP…ISRPSPPTMR (75 aa)) are disordered. Positions 529-540 (PTATTTPARPYP) are enriched in low complexity. In terms of domain architecture, EGF-like 3 spans 574 to 615 (ETDECRLNQNICGHGECVPGPPDYSCHCNPGYRSHPQHRYCV). 37 disulfides stabilise this stretch: cysteine 578–cysteine 590, cysteine 585–cysteine 599, cysteine 601–cysteine 614, cysteine 620–cysteine 632, cysteine 625–cysteine 641, cysteine 664–cysteine 676, cysteine 670–cysteine 685, cysteine 687–cysteine 701, cysteine 748–cysteine 759, cysteine 754–cysteine 768, cysteine 770–cysteine 783, cysteine 789–cysteine 800, cysteine 795–cysteine 809, cysteine 811–cysteine 824, cysteine 830–cysteine 841, cysteine 836–cysteine 850, cysteine 852–cysteine 864, cysteine 870–cysteine 883, cysteine 877–cysteine 892, cysteine 894–cysteine 907, cysteine 919–cysteine 942, cysteine 929–cysteine 954, cysteine 943–cysteine 959, cysteine 944–cysteine 971, cysteine 997–cysteine 1010, cysteine 1005–cysteine 1019, cysteine 1021–cysteine 1034, cysteine 1040–cysteine 1051, cysteine 1046–cysteine 1060, cysteine 1062–cysteine 1075, cysteine 1086–cysteine 1097, cysteine 1092–cysteine 1106, cysteine 1108–cysteine 1121, cysteine 1138–cysteine 1162, cysteine 1148–cysteine 1174, cysteine 1163–cysteine 1177, and cysteine 1164–cysteine 1186. Residues 616–659 (DVNECEAEPCGPGRGICMNTGGSYNCHCNRGYRLHVGAGGRSCV) enclose the EGF-like 4; calcium-binding domain. The EGF-like 5; calcium-binding domain maps to 660–702 (DLNECAKPHLCGDGGFCINFPGHYKCNCYPGYRLKASRPPVCE). The region spanning 744 to 784 (DVNECAEGSPCSPGWCENLPGSFRCTCAQGYAPAPDGRSCL) is the EGF-like 6; calcium-binding domain. An EGF-like 7; calcium-binding domain is found at 785–825 (DVDECEAGDVCDNGICSNTPGSFQCQCLSGYHLSRDRSHCE). In terms of domain architecture, EGF-like 8; calcium-binding spans 826–865 (DIDECDFPAACIGGDCINTNGSYRCLCPQGHRLVGGRKCQ). Asparagine 845 is a glycosylation site (N-linked (GlcNAc...) asparagine). Positions 866 to 908 (DIDECSQDPSLCLPHGACKNLQGSYVCVCDEGFTPTQDQHGCE) constitute an EGF-like 9; calcium-binding domain. The TB 3 domain maps to 917–971 (KECYLNFDDTVFCDSVLATNVTQQECCCSLGAGWGDHCEIYPCPVYSSAEFHSLC). Asparagine 936 is a glycosylation site (N-linked (GlcNAc...) asparagine). Residues 993–1035 (DIDECMLFGSEICKEGKCVNTQPGYECYCKQGFYYDGNLLECV) form the EGF-like 10; calcium-binding domain. Residues 1036–1076 (DVDECLDESNCRNGVCENTRGGYRCACTPPAEYSPAQRQCL) enclose the EGF-like 11; calcium-binding domain. Residues 1082–1122 (DVDECQDPAACRPGRCVNLPGSYRCECRPPWVPGPSGRDCQ) enclose the EGF-like 12; calcium-binding domain. The TB 4 domain maps to 1136 to 1186 (DVCWSQRGEDGMCAGPLAGPALTFDDCCCRQGRGWGAQCRPCPPRGAGSHC). Polar residues predominate over residues 1188 to 1198 (TSQSESNSFWD). The segment at 1188 to 1219 (TSQSESNSFWDTSPLLLGKPPRDEDSSEEDSD) is disordered. The 45-residue stretch at 1254–1298 (DIDECRELNQRGLLCKSERCVNTSGSFRCVCKAGFARSRPHGACV) folds into the EGF-like 13; calcium-binding domain. 2 cysteine pairs are disulfide-bonded: cysteine 1258–cysteine 1273 and cysteine 1268–cysteine 1282. N-linked (GlcNAc...) asparagine glycosylation is present at asparagine 1275.

It belongs to the LTBP family. In terms of assembly, forms part of the large latent transforming growth factor beta precursor complex; removal is essential for activation of complex. Interacts with EFEMP2. In terms of processing, contains hydroxylated asparagine residues. Post-translationally, two intrachain disulfide bonds from the TB3 domain are rearranged upon TGFB1 binding, and form interchain bonds with TGFB1 propeptide, anchoring it to the extracellular matrix. As to expression, isoform 2: Expressed prominently in heart, skeletal muscle, prostate, testis, small intestine and ovary. Isoform 1: Strongly expressed in pancreas and liver.

It is found in the secreted. It localises to the extracellular space. The protein resides in the extracellular matrix. Its function is as follows. Key regulator of transforming growth factor beta (TGFB1, TGFB2 and TGFB3) that controls TGF-beta activation by maintaining it in a latent state during storage in extracellular space. Associates specifically via disulfide bonds with the Latency-associated peptide (LAP), which is the regulatory chain of TGF-beta, and regulates integrin-dependent activation of TGF-beta. In Homo sapiens (Human), this protein is Latent-transforming growth factor beta-binding protein 3 (LTBP3).